A 253-amino-acid polypeptide reads, in one-letter code: uncharacterized protein (253 aa).

A signal peptide spans 1-15 (MNRVILFHFHFFKNA).

This is an uncharacterized protein from Archaeoglobus fulgidus (strain ATCC 49558 / DSM 4304 / JCM 9628 / NBRC 100126 / VC-16).